The primary structure comprises 1173 residues: Protein GIGANTEA (1173 aa).

Disordered regions lie at residues 150–187 (EQQN…RKPL), 604–641 (SGSK…NVKG), and 840–863 (SRTE…SGRP). Polar residues-rich tracts occupy residues 162-172 (SKATTSGSPTS) and 613-633 (YAST…QTAN). Over residues 854–863 (RHSDEGSGRP) the composition is skewed to basic and acidic residues.

This sequence belongs to the GIGANTEA family. In terms of assembly, interacts with SPY. Interacts with ADO1 (via N-terminus) and ADO2. Interacts with ADO3 (via N-terminus). Interacts (via N-terminus) with CDF1. Interacts (via N-terminus) with TCP4. In terms of tissue distribution, widely expressed with highest levels in inflorescence apices, young flowers and young siliques.

It is found in the nucleus. Its subcellular location is the cytoplasm. Its function is as follows. Involved in regulation of circadian rhythm and photoperiodic flowering. May play a role in maintenance of circadian amplitude and period length. Is involved in phytochrome B signaling. Stabilizes ADO3 and the circadian photoreceptor ADO1/ZTL. Regulates 'CONSTANS' (CO) in the long-day flowering pathway by modulating the ADO3-dependent protein stability of CDF1 and CDF2, but is not essential to activate CO transcription. Regulates, via the microRNA miR172, a CO-independent pathway that promotes photoperiodic flowering by inducing 'FLOWERING LOCUS T'. The chain is Protein GIGANTEA (GI) from Arabidopsis thaliana (Mouse-ear cress).